The chain runs to 207 residues: Dephospho-CoA kinase (207 aa).

Residues 5–207 enclose the DPCK domain; the sequence is IVGLTGGIAS…AALQTHRIEN (203 aa). 13–18 provides a ligand contact to ATP; sequence ASGKSA.

It belongs to the CoaE family.

It localises to the cytoplasm. The enzyme catalyses 3'-dephospho-CoA + ATP = ADP + CoA + H(+). It participates in cofactor biosynthesis; coenzyme A biosynthesis; CoA from (R)-pantothenate: step 5/5. Functionally, catalyzes the phosphorylation of the 3'-hydroxyl group of dephosphocoenzyme A to form coenzyme A. In Xanthomonas campestris pv. campestris (strain ATCC 33913 / DSM 3586 / NCPPB 528 / LMG 568 / P 25), this protein is Dephospho-CoA kinase.